A 37-amino-acid chain; its full sequence is Potassium channel toxin alpha-KTx 1.4 (37 aa).

Disulfide bonds link Cys7-Cys28, Cys13-Cys33, and Cys17-Cys35.

The protein belongs to the short scorpion toxin superfamily. Potassium channel inhibitor family. Alpha-KTx 01 subfamily. Expressed by the venom gland.

The protein localises to the secreted. In terms of biological role, blocks selectively the high conductance calcium-activated (maxi-K) potassium channels. The protein is Potassium channel toxin alpha-KTx 1.4 of Centruroides limbatus (Bark scorpion).